Consider the following 366-residue polypeptide: tRNA/tmRNA (uracil-C(5))-methyltransferase (366 aa).

The S-adenosyl-L-methionine site is built by Gln188, Tyr216, Asn221, Glu237, and Asp297. The active-site Nucleophile is Cys322. Glu356 (proton acceptor) is an active-site residue.

Belongs to the class I-like SAM-binding methyltransferase superfamily. RNA M5U methyltransferase family. TrmA subfamily.

The catalysed reaction is uridine(54) in tRNA + S-adenosyl-L-methionine = 5-methyluridine(54) in tRNA + S-adenosyl-L-homocysteine + H(+). The enzyme catalyses uridine(341) in tmRNA + S-adenosyl-L-methionine = 5-methyluridine(341) in tmRNA + S-adenosyl-L-homocysteine + H(+). Its function is as follows. Dual-specificity methyltransferase that catalyzes the formation of 5-methyluridine at position 54 (m5U54) in all tRNAs, and that of position 341 (m5U341) in tmRNA (transfer-mRNA). The chain is tRNA/tmRNA (uracil-C(5))-methyltransferase from Histophilus somni (strain 129Pt) (Haemophilus somnus).